A 185-amino-acid polypeptide reads, in one-letter code: Elongation factor P (185 aa).

Belongs to the elongation factor P family.

It is found in the cytoplasm. Its pathway is protein biosynthesis; polypeptide chain elongation. In terms of biological role, involved in peptide bond synthesis. Stimulates efficient translation and peptide-bond synthesis on native or reconstituted 70S ribosomes in vitro. Probably functions indirectly by altering the affinity of the ribosome for aminoacyl-tRNA, thus increasing their reactivity as acceptors for peptidyl transferase. The protein is Elongation factor P of Mesomycoplasma hyopneumoniae (strain 7448) (Mycoplasma hyopneumoniae).